We begin with the raw amino-acid sequence, 81 residues long: Short neurotoxin 1 (81 aa).

The first 21 residues, 1–21 (MKTLLLSPVVVTIVCLDLGYT), serve as a signal peptide directing secretion. 4 cysteine pairs are disulfide-bonded: Cys24/Cys43, Cys38/Cys60, Cys62/Cys73, and Cys74/Cys79.

It belongs to the three-finger toxin family. Short-chain subfamily. Type I alpha-neurotoxin sub-subfamily. As to expression, expressed by the venom gland.

It localises to the secreted. In terms of biological role, binds to muscle nicotinic acetylcholine receptor (nAChR) and inhibit acetylcholine from binding to the receptor, thereby impairing neuromuscular transmission. This Hydrophis peronii (Spiny-headed seasnake) protein is Short neurotoxin 1.